Consider the following 580-residue polypeptide: Tricyclene synthase TPS4, chloroplastic (580 aa).

The N-terminal 41 residues, 1-41, are a transit peptide targeting the chloroplast; it reads MLLNSSFISLPSFFKSQELGRTNLLIHRNGSPLLCYATNTN. (2E)-geranyl diphosphate-binding residues include Arg296, Asp334, Asp338, Arg475, and Asn478. Positions 334 and 338 each coordinate Mg(2+). A DDXXD motif motif is present at residues 334–338; it reads DDIYD. Positions 478, 482, and 486 each coordinate Mg(2+).

It belongs to the terpene synthase family. Tpsb subfamily. Mg(2+) serves as cofactor. Mn(2+) is required as a cofactor. Expressed in leaves.

Its subcellular location is the plastid. It is found in the chloroplast stroma. The enzyme catalyses (2E)-geranyl diphosphate = tricyclene + diphosphate. It carries out the reaction (2E)-geranyl diphosphate = (E)-beta-ocimene + diphosphate. It participates in secondary metabolite biosynthesis; terpenoid biosynthesis. Functionally, promotes the emission of terpenes volatile organic compounds (VOC) in response to damage mediated by arthropod herbivores (e.g. Spodoptera exigua), probably to attract natural enemies of the herbivores. The polypeptide is Tricyclene synthase TPS4, chloroplastic (TPS4) (Medicago truncatula (Barrel medic)).